Reading from the N-terminus, the 311-residue chain is Olfactory receptor 10J4 (311 aa).

The Extracellular portion of the chain corresponds to 1–29 (MPRPNFMAVTEFTFEGFSIFEWHHRLILF). Residues 30 to 50 (VIFLVLYVLTLASNAIILIVI) traverse the membrane as a helical segment. The Cytoplasmic portion of the chain corresponds to 51 to 57 (RLNHQLH). Residues 58 to 78 (TPMYFFLSVLSISETYYTVAI) traverse the membrane as a helical segment. At 79-98 (NPQMLSGLLSPQQTISIPGC) the chain is on the extracellular side. The cysteines at positions 98 and 180 are disulfide-linked. The chain crosses the membrane as a helical span at residues 99–119 (AAQLFFYLTFGVNKCFLLTAM). The Cytoplasmic segment spans residues 120 to 149 (GYDHYVAICNPLQYSVIMGKKACIQLVSGS). The chain crosses the membrane as a helical span at residues 150–170 (WNIGLSTAIIQVSSVFSLPFC). Topologically, residues 171 to 202 (DANLISHFFCDIRPIMKLACADTTIKEFITLL) are extracellular. The chain crosses the membrane as a helical span at residues 203 to 223 (ISLCVLVLPMVLIFISYVLIV). Residues 224–237 (TTILKIASAEGRRK) lie on the Cytoplasmic side of the membrane. The chain crosses the membrane as a helical span at residues 238-254 (AFATCASHLTVVIVHYG). Residues 255–272 (RTSFIYLKPKSQNSLQDR) lie on the Extracellular side of the membrane. The helical transmembrane segment at 273–292 (LISVTYTVITPLLNPVVYSL) threads the bilayer. At 293-311 (RNKEVKDALLRALGRKPLS) the chain is on the cytoplasmic side.

The protein belongs to the G-protein coupled receptor 1 family.

It localises to the cell membrane. Its function is as follows. Odorant receptor. This chain is Olfactory receptor 10J4 (OR10J4), found in Homo sapiens (Human).